The following is a 626-amino-acid chain: 4-hydroxy-3-methylbut-2-en-1-yl diphosphate synthase (flavodoxin) (626 aa).

Cys-521, Cys-524, Cys-555, and Glu-562 together coordinate [4Fe-4S] cluster.

It belongs to the IspG family. The cofactor is [4Fe-4S] cluster.

The catalysed reaction is (2E)-4-hydroxy-3-methylbut-2-enyl diphosphate + oxidized [flavodoxin] + H2O + 2 H(+) = 2-C-methyl-D-erythritol 2,4-cyclic diphosphate + reduced [flavodoxin]. It functions in the pathway isoprenoid biosynthesis; isopentenyl diphosphate biosynthesis via DXP pathway; isopentenyl diphosphate from 1-deoxy-D-xylulose 5-phosphate: step 5/6. Functionally, converts 2C-methyl-D-erythritol 2,4-cyclodiphosphate (ME-2,4cPP) into 1-hydroxy-2-methyl-2-(E)-butenyl 4-diphosphate. The protein is 4-hydroxy-3-methylbut-2-en-1-yl diphosphate synthase (flavodoxin) of Bacteroides fragilis (strain ATCC 25285 / DSM 2151 / CCUG 4856 / JCM 11019 / LMG 10263 / NCTC 9343 / Onslow / VPI 2553 / EN-2).